We begin with the raw amino-acid sequence, 156 residues long: SsrA-binding protein (156 aa).

This sequence belongs to the SmpB family.

It localises to the cytoplasm. Its function is as follows. Required for rescue of stalled ribosomes mediated by trans-translation. Binds to transfer-messenger RNA (tmRNA), required for stable association of tmRNA with ribosomes. tmRNA and SmpB together mimic tRNA shape, replacing the anticodon stem-loop with SmpB. tmRNA is encoded by the ssrA gene; the 2 termini fold to resemble tRNA(Ala) and it encodes a 'tag peptide', a short internal open reading frame. During trans-translation Ala-aminoacylated tmRNA acts like a tRNA, entering the A-site of stalled ribosomes, displacing the stalled mRNA. The ribosome then switches to translate the ORF on the tmRNA; the nascent peptide is terminated with the 'tag peptide' encoded by the tmRNA and targeted for degradation. The ribosome is freed to recommence translation, which seems to be the essential function of trans-translation. The sequence is that of SsrA-binding protein from Trichodesmium erythraeum (strain IMS101).